The chain runs to 425 residues: MEYEAVADLAPDRRVALFERDAGVDAVRSDVAEILDRVESEGDVALRALASEFDDVEVGNLDVTDEMERAADAVPDDVYDAIEDAAANIRAFHEAQLPDDWRESFAAGRELGRRFRPVRRVGVYAPGGTAAYPSSVLMGVIPAVVAGVEQVAVATPPAETINPVTLAAAHAAGADRVYQVGGAQAIGAFAYGTETVDTVQTVVGPGNKWVTAAKAEVRGDVEIDFLAGPSELLVVADETAEPAFVAADLLAQAEHDPNASVVAVTDDEATAAAITDAVAARLDDRERADTIRAALDNEASGVFVARSMSEAVMFAEEYAAEHLSIQASDDEALLDRIDSAGSVFLGGYAPVAAGDYAAGTNHVLPTNGTARVTGGLSVDTFLRSTTVQRLDREGLAALRETVTTLADAEGLEGHAASVDARFEDE.

Positions 124, 184, and 207 each coordinate NAD(+). Substrate-binding residues include S230, Q252, and H255. 2 residues coordinate Zn(2+): Q252 and H255. Catalysis depends on proton acceptor residues E321 and H322. Substrate-binding residues include H322, D355, E409, and H414. Residue D355 participates in Zn(2+) binding. H414 is a binding site for Zn(2+).

It belongs to the histidinol dehydrogenase family. Zn(2+) serves as cofactor.

The enzyme catalyses L-histidinol + 2 NAD(+) + H2O = L-histidine + 2 NADH + 3 H(+). Its pathway is amino-acid biosynthesis; L-histidine biosynthesis; L-histidine from 5-phospho-alpha-D-ribose 1-diphosphate: step 9/9. Catalyzes the sequential NAD-dependent oxidations of L-histidinol to L-histidinaldehyde and then to L-histidine. The chain is Histidinol dehydrogenase from Halobacterium salinarum (strain ATCC 700922 / JCM 11081 / NRC-1) (Halobacterium halobium).